Reading from the N-terminus, the 545-residue chain is Chaperonin GroEL 1 (545 aa).

ATP contacts are provided by residues 30 to 33, Lys-51, 87 to 91, Gly-415, and Asp-495; these read TLGP and DGTTT.

This sequence belongs to the chaperonin (HSP60) family. In terms of assembly, forms a cylinder of 14 subunits composed of two heptameric rings stacked back-to-back. Interacts with the co-chaperonin GroES.

It is found in the cytoplasm. The enzyme catalyses ATP + H2O + a folded polypeptide = ADP + phosphate + an unfolded polypeptide.. In terms of biological role, together with its co-chaperonin GroES, plays an essential role in assisting protein folding. The GroEL-GroES system forms a nano-cage that allows encapsulation of the non-native substrate proteins and provides a physical environment optimized to promote and accelerate protein folding. The sequence is that of Chaperonin GroEL 1 from Rhizobium meliloti (strain 1021) (Ensifer meliloti).